A 545-amino-acid chain; its full sequence is Chaperonin GroEL (545 aa).

ATP-binding positions include 30 to 33, lysine 51, 87 to 91, glycine 415, and aspartate 496; these read TLGP and DGTTT. The interval 526-545 is disordered; it reads PEPKAPAGGMPDMGGMGGMM. Positions 536 to 545 are enriched in gly residues; the sequence is PDMGGMGGMM.

The protein belongs to the chaperonin (HSP60) family. In terms of assembly, forms a cylinder of 14 subunits composed of two heptameric rings stacked back-to-back. Interacts with the co-chaperonin GroES.

The protein localises to the cytoplasm. The catalysed reaction is ATP + H2O + a folded polypeptide = ADP + phosphate + an unfolded polypeptide.. Its function is as follows. Together with its co-chaperonin GroES, plays an essential role in assisting protein folding. The GroEL-GroES system forms a nano-cage that allows encapsulation of the non-native substrate proteins and provides a physical environment optimized to promote and accelerate protein folding. The protein is Chaperonin GroEL of Paracoccus denitrificans (strain Pd 1222).